We begin with the raw amino-acid sequence, 325 residues long: Heat-inducible transcription repressor HrcA (325 aa).

Belongs to the HrcA family.

Negative regulator of class I heat shock genes (grpE-dnaK-dnaJ and groELS operons). Prevents heat-shock induction of these operons. In Staphylococcus aureus (strain MRSA252), this protein is Heat-inducible transcription repressor HrcA.